A 348-amino-acid chain; its full sequence is Ion-translocating oxidoreductase complex subunit D (348 aa).

A run of 3 helical transmembrane segments spans residues 20–39 (LMKW…TYFF), 72–91 (ALRD…AIPP), and 120–140 (PFNP…VQMT). T187 carries the FMN phosphoryl threonine modification. 5 helical membrane-spanning segments follow: residues 214-234 (LAGV…LVLI), 241-261 (WHIP…FLMF), 266-286 (TASP…FFIA), 300-320 (LVFG…GGFP), and 321-341 (DGVA…DYYT).

Belongs to the NqrB/RnfD family. As to quaternary structure, the complex is composed of six subunits: RnfA, RnfB, RnfC, RnfD, RnfE and RnfG. It depends on FMN as a cofactor.

Its subcellular location is the cell inner membrane. Part of a membrane-bound complex that couples electron transfer with translocation of ions across the membrane. In Vibrio atlanticus (strain LGP32) (Vibrio splendidus (strain Mel32)), this protein is Ion-translocating oxidoreductase complex subunit D.